Consider the following 339-residue polypeptide: 4-hydroxy-2-oxovalerate aldolase 3 (339 aa).

In terms of domain architecture, Pyruvate carboxyltransferase spans 7 to 259 (IRVTDTSLRD…KTGIDFFAIA (253 aa)). 15–16 (RD) contacts substrate. Asp16 lines the Mn(2+) pocket. The active-site Proton acceptor is His19. 2 residues coordinate substrate: Ser169 and His198. His198 and His200 together coordinate Mn(2+). Tyr289 lines the substrate pocket.

Belongs to the 4-hydroxy-2-oxovalerate aldolase family.

The catalysed reaction is (S)-4-hydroxy-2-oxopentanoate = acetaldehyde + pyruvate. The sequence is that of 4-hydroxy-2-oxovalerate aldolase 3 (hsaF) from Rhodococcus jostii (strain RHA1).